We begin with the raw amino-acid sequence, 231 residues long: Ninja-family protein AFP3 (231 aa).

The span at 83–96 shows a compositional bias: basic residues; it reads AKRKRSEKQRKHKA. A disordered region spans residues 83-152; that stretch reads AKRKRSEKQR…SAQSQPENLG (70 aa). Polar residues predominate over residues 130 to 152; the sequence is QATTNKSVETSPSSAQSQPENLG.

The protein belongs to the Ninja family. As to quaternary structure, forms a heterodimer with AFP2. Interacts with ABI5/DPBF1, DPBF2, AREB3/DPBF3, EEL/DPBF4, ABF1, ABF3/DPBF5 and ABF4/AREB2.

It is found in the nucleus. In terms of biological role, acts as a negative regulator of abscisic acid (ABA) response and stress responses. The chain is Ninja-family protein AFP3 (AFP3) from Arabidopsis thaliana (Mouse-ear cress).